Consider the following 493-residue polypeptide: Cyclin-dependent kinase-like 2 (493 aa).

Residues 4–287 (YENLGLVGEG…CAELLHHDFF (284 aa)) form the Protein kinase domain. Residues 10-18 (VGEGSYGMV) and lysine 33 contribute to the ATP site. The [NKR]KIAxRE signature appears at 45-51 (KKIAMRE). Catalysis depends on aspartate 126, which acts as the Proton acceptor. Positions 363 to 384 (GEKAEKGNRASNASCLHDSRTS) are disordered.

The protein belongs to the protein kinase superfamily. CMGC Ser/Thr protein kinase family. CDC2/CDKX subfamily. As to expression, expressed in testis and kidney, and at lower level in brain and lung.

The protein localises to the cytoplasm. It localises to the nucleus. It catalyses the reaction L-seryl-[protein] + ATP = O-phospho-L-seryl-[protein] + ADP + H(+). The enzyme catalyses L-threonyl-[protein] + ATP = O-phospho-L-threonyl-[protein] + ADP + H(+). The protein is Cyclin-dependent kinase-like 2 of Homo sapiens (Human).